The following is an 840-amino-acid chain: Cullin-4 (840 aa).

Residues 1–11 (MTSGAPPTIST) show a composition bias toward polar residues. The tract at residues 1–82 (MTSGAPPTIS…TGNSSRTTAT (82 aa)) is disordered. Residues 33–48 (TEAKQMRGDTENRSDG) show a composition bias toward basic and acidic residues. Residues 69–82 (FRSQTGNSSRTTAT) are compositionally biased toward polar residues. Residues 772–831 (DRQYKIDAAVVRIMKARKQLNHQTLMTELLQQLRFPVSTADIKKRLESLIEREYISRDPE) enclose the Cullin neddylation domain. Lysine 786 is covalently cross-linked (Glycyl lysine isopeptide (Lys-Gly) (interchain with G-Cter in NEDD8)).

It belongs to the cullin family. As to quaternary structure, part of an E3 ubiquitin-protein ligase complex including cul-4 and ddb-1. Post-translationally, neddylated. Deneddylated via its interaction with the COP9 signalosome (CSN) complex.

Its pathway is protein modification; protein ubiquitination. Its function is as follows. Component of cullin-based E3 ubiquitin-protein ligase complexes which mediate the ubiquitination and subsequent proteasomal degradation of target proteins. The functional specificity of the E3 ubiquitin-protein ligase complex depends on the variable substrate recognition component. In association with ddb-1 directs ubiquitination of cdt-1 during S phase and is required for restraining DNA rereplication. Probably is involved in ubiquitination of cki-1. The sequence is that of Cullin-4 (cul-4) from Caenorhabditis elegans.